The following is a 90-amino-acid chain: Small ribosomal subunit protein uS15 (90 aa).

It belongs to the universal ribosomal protein uS15 family. In terms of assembly, part of the 30S ribosomal subunit. Forms a bridge to the 50S subunit in the 70S ribosome, contacting the 23S rRNA.

One of the primary rRNA binding proteins, it binds directly to 16S rRNA where it helps nucleate assembly of the platform of the 30S subunit by binding and bridging several RNA helices of the 16S rRNA. Functionally, forms an intersubunit bridge (bridge B4) with the 23S rRNA of the 50S subunit in the ribosome. The chain is Small ribosomal subunit protein uS15 from Aliarcobacter butzleri (strain RM4018) (Arcobacter butzleri).